The following is a 161-amino-acid chain: Troponin C, slow skeletal and cardiac muscles (161 aa).

At Met1 the chain carries N-acetylmethionine. EF-hand domains follow at residues 16-51 (QKNEFKAAFDIFVLGAEDGCISTKELGKVMRMLGQN), 52-87 (PTPEELQEMIDEVDEDGSGTVDFDEFLVMMVRCMKD), 92-127 (KTEEELSDLFRMFDKNADGYIDLEELKIMLQATGET), and 128-161 (ITEDDIEELMKDGDKNNDGRIDYDEFLEFMKGVE). Ca(2+)-binding residues include Asp65, Asp67, Ser69, Thr71, Glu76, Asp105, Asn107, Asp109, Tyr111, Glu116, Asp141, Asn143, Asp145, Arg147, and Glu152.

Belongs to the troponin C family.

Troponin is the central regulatory protein of striated muscle contraction. Tn consists of three components: Tn-I which is the inhibitor of actomyosin ATPase, Tn-T which contains the binding site for tropomyosin and Tn-C. The binding of calcium to Tn-C abolishes the inhibitory action of Tn on actin filaments. The protein is Troponin C, slow skeletal and cardiac muscles (TNNC1) of Gallus gallus (Chicken).